Consider the following 191-residue polypeptide: MIIGVSGIQGDFREHKWMIEKLGHESYVVRTPEDLEKVDGLIIPGGESTTMIRIMKRIGLFEKLKEKILNGLPVYGTCAGLIVLAKEIENYPQESLGVIDIKVMRNAYGRQVDSFDEMVEIKGFNKPFKAIFIRAPRVDGWGPEVDVLSTLDNHPIMLRQKNVLVTSFHPELTDDTRVHEYFIKMVEEYRK.

46 to 48 (GES) serves as a coordination point for L-glutamine. Cys-78 (nucleophile) is an active-site residue. L-glutamine contacts are provided by residues Arg-105 and 133–134 (IR). Residues His-169 and Glu-171 each act as charge relay system in the active site.

This sequence belongs to the glutaminase PdxT/SNO family. As to quaternary structure, in the presence of PdxS, forms a dodecamer of heterodimers. Only shows activity in the heterodimer.

The catalysed reaction is aldehydo-D-ribose 5-phosphate + D-glyceraldehyde 3-phosphate + L-glutamine = pyridoxal 5'-phosphate + L-glutamate + phosphate + 3 H2O + H(+). It catalyses the reaction L-glutamine + H2O = L-glutamate + NH4(+). Its pathway is cofactor biosynthesis; pyridoxal 5'-phosphate biosynthesis. Catalyzes the hydrolysis of glutamine to glutamate and ammonia as part of the biosynthesis of pyridoxal 5'-phosphate. The resulting ammonia molecule is channeled to the active site of PdxS. The sequence is that of Pyridoxal 5'-phosphate synthase subunit PdxT from Fervidobacterium nodosum (strain ATCC 35602 / DSM 5306 / Rt17-B1).